We begin with the raw amino-acid sequence, 507 residues long: ATP synthase subunit alpha, chloroplastic (507 aa).

ATP is bound at residue 170–177 (GDRQTGKT). Phosphothreonine is present on Thr257.

Belongs to the ATPase alpha/beta chains family. F-type ATPases have 2 components, CF(1) - the catalytic core - and CF(0) - the membrane proton channel. CF(1) has five subunits: alpha(3), beta(3), gamma(1), delta(1), epsilon(1). CF(0) has four main subunits: a, b, b' and c.

It localises to the plastid. Its subcellular location is the chloroplast thylakoid membrane. The enzyme catalyses ATP + H2O + 4 H(+)(in) = ADP + phosphate + 5 H(+)(out). In terms of biological role, produces ATP from ADP in the presence of a proton gradient across the membrane. The alpha chain is a regulatory subunit. The sequence is that of ATP synthase subunit alpha, chloroplastic from Barbarea verna (Land cress).